Reading from the N-terminus, the 362-residue chain is Serpentine receptor class delta-2 (362 aa).

7 helical membrane passes run 27-47 (LSCL…YLIW), 57-77 (YAIY…ISFF), 104-124 (FCYF…WILL), 144-164 (LIRN…VYVF), 209-229 (LISI…ILYF), 264-284 (GIPI…FGII), and 292-312 (ITFR…IIFV).

This sequence belongs to the nematode receptor-like protein srd family.

It localises to the membrane. Its function is as follows. Thought to be a chemosensory receptor. The protein is Serpentine receptor class delta-2 (srd-2) of Caenorhabditis elegans.